Here is a 383-residue protein sequence, read N- to C-terminus: Protein delta homolog 1 (383 aa).

Residues Met-1–Gly-23 form the signal peptide. 6 EGF-like domains span residues Ala-24–Glu-55, Thr-59–Glu-86, Asp-88–Gln-125, Lys-127–Glu-168, Val-170–Ser-206, and Pro-208–Ala-245. Topologically, residues Ala-24–Cys-306 are extracellular. Disulfide bonds link Cys-26/Cys-37, Cys-30/Cys-43, Cys-45/Cys-54, Cys-63/Cys-68, Cys-76/Cys-85, Cys-92/Cys-103, Cys-97/Cys-113, Cys-115/Cys-124, Cys-131/Cys-144, Cys-138/Cys-156, Cys-158/Cys-167, Cys-174/Cys-185, Cys-179/Cys-194, Cys-196/Cys-205, Cys-212/Cys-223, Cys-217/Cys-233, and Cys-235/Cys-244. Residues Phe-307 to Leu-327 form a helical membrane-spanning segment. The Cytoplasmic portion of the chain corresponds to Asn-328–Ile-383.

Monomer. Interacts with SH3RF2. Post-translationally, glycosylated. As to expression, pancreas and adrenal glands (at protein level).

Its subcellular location is the membrane. The protein resides in the cytoplasm. Functionally, may have a role in neuroendocrine differentiation. Inhibits adipocyte differentiation. The chain is Protein delta homolog 1 (Dlk1) from Rattus norvegicus (Rat).